The following is a 332-amino-acid chain: Beta-ketoacyl-[acyl-carrier-protein] synthase III (332 aa).

Residues Cys116 and His257 contribute to the active site. Positions 258 to 262 (QANQR) are ACP-binding. Asn287 is a catalytic residue.

It belongs to the thiolase-like superfamily. FabH family. As to quaternary structure, homodimer.

It localises to the cytoplasm. It carries out the reaction malonyl-[ACP] + acetyl-CoA + H(+) = 3-oxobutanoyl-[ACP] + CO2 + CoA. Its pathway is lipid metabolism; fatty acid biosynthesis. Its function is as follows. Catalyzes the condensation reaction of fatty acid synthesis by the addition to an acyl acceptor of two carbons from malonyl-ACP. Catalyzes the first condensation reaction which initiates fatty acid synthesis and may therefore play a role in governing the total rate of fatty acid production. Possesses both acetoacetyl-ACP synthase and acetyl transacylase activities. Its substrate specificity determines the biosynthesis of branched-chain and/or straight-chain of fatty acids. The polypeptide is Beta-ketoacyl-[acyl-carrier-protein] synthase III (Acaryochloris marina (strain MBIC 11017)).